The primary structure comprises 805 residues: Chloride channel protein (805 aa).

Residues methionine 1–leucine 48 lie on the Cytoplasmic side of the membrane. 2 consecutive transmembrane segments (helical) span residues glycine 49–leucine 86 and leucine 93–valine 116. A Selectivity filter part_1 motif is present at residues glycine 122–proline 126. A chloride-binding site is contributed by serine 123. Positions isoleucine 125–isoleucine 132 form an intramembrane region, helical. A run of 2 helical transmembrane segments spans residues leucine 141–alanine 159 and glutamate 166–leucine 184. The short motif at glycine 164–proline 168 is the Selectivity filter part_2 element. 2 intramembrane regions (helical) span residues isoleucine 201 to cysteine 213 and proline 217 to isoleucine 225. 3 helical membrane passes run tyrosine 237–valine 256, methionine 283–methionine 311, and isoleucine 320–leucine 339. A glycan (N-linked (GlcNAc...) asparagine) is linked at asparagine 365. Helical transmembrane passes span leucine 388–alanine 408 and glycine 416–leucine 439. Positions glycine 416–proline 420 match the Selectivity filter part_3 motif. Phenylalanine 418 contacts chloride. An intramembrane region (helical) is located at residues glycine 456–valine 470. The segment at residues threonine 471–histidine 472 is an intramembrane region (note=Loop between two helices). Residues alanine 473 to threonine 484 constitute an intramembrane region (helical). Residues glycine 485–histidine 489 constitute an intramembrane region (note=Loop between two helices). The helical transmembrane segment at valine 490–leucine 507 threads the bilayer. Residues glutamine 508–lysine 805 are Cytoplasmic-facing. Tyrosine 512 is a binding site for chloride. Residues methionine 543 to alanine 601 form the CBS 1 domain. Disordered stretches follow at residues proline 606–phenylalanine 625 and lysine 653–threonine 684. The 58-residue stretch at isoleucine 719–phenylalanine 776 folds into the CBS 2 domain.

The protein belongs to the chloride channel (TC 2.A.49) family. ClC-0 subfamily. As to quaternary structure, homodimer. Each subunit contains a channel ('Double barreled channel').

The protein resides in the membrane. Functionally, voltage-gated chloride channel. This channel is thought to ensure the high conductance of the non-innervated membrane of the electrocyte necessary for efficient current generation caused by sodium influx through the acetylcholine receptor at the innervated membrane. In Torpedo marmorata (Marbled electric ray), this protein is Chloride channel protein.